Consider the following 103-residue polypeptide: Small ribosomal subunit protein uS10 (103 aa).

This sequence belongs to the universal ribosomal protein uS10 family. As to quaternary structure, part of the 30S ribosomal subunit.

Its function is as follows. Involved in the binding of tRNA to the ribosomes. This is Small ribosomal subunit protein uS10 from Salinibacter ruber (strain DSM 13855 / M31).